The chain runs to 491 residues: 3-epi-6-deoxocathasterone 23-monooxygenase CYP90D1 (491 aa).

The helical transmembrane segment at 7–27 (LLFFSFFFFIIIVIFNKINGL) threads the bilayer. Residue Cys442 coordinates heme.

This sequence belongs to the cytochrome P450 family. It depends on heme as a cofactor. Expressed in leaf vascular tissue.

It is found in the endoplasmic reticulum membrane. The catalysed reaction is 3-epi-6-deoxocathasterone + reduced [NADPH--hemoprotein reductase] + O2 = 6-deoxotyphasterol + oxidized [NADPH--hemoprotein reductase] + H2O + H(+). It catalyses the reaction (22S,24R)-22-hydroxy-5alpha-ergostan-3-one + reduced [NADPH--hemoprotein reductase] + O2 = 3-dehydro-6-deoxoteasterone + oxidized [NADPH--hemoprotein reductase] + H2O + H(+). It functions in the pathway plant hormone biosynthesis; brassinosteroid biosynthesis. Functionally, involved in brassinosteroid (BR) biosynthesis. May convert teasterone (TE) to 3-dehydroteasterone (3DT, 3-DHT), or 6-deoxoteasterone (6-deoxoTE) to 3-dehydro-6-deoxoteasterone (6-deoxo3DT, 6-deoxo3DHT). C-23 hydroxylase that converts directly (22S,24R)-22-hydroxy-5-alpha-ergostan-3-one and 3-epi-6-deoxocathasterone to 3-dehydro-6-deoxoteasterone (6-deoxo3DT, 6-deoxo3DHT) and 6-deoxotyphasterol (6-deoxoTY), respectively. These C-23 hydroxylation shortcuts bypass campestanol, 6-deoxocathasterone, and 6-deoxoteasterone (6-deoxoTE). Also catalyzes the conversion of cathasterone to teasterone (TE), 6-deoxotyphasterol (6-deoxoTY) to 6-deoxocathasterone (6-deoxoCT), (22S,24R)-22-hydroxyergost-4-en-3-one (22-OH-4-en-3-one) to (22R,23R)-22,23-dihydroxy-campest-4-en-3-one (22,23-diOH-4-en-3-one) and (22S)-22-hydroxycampesterol (22-OHCR) to (22R,23R)-22,23-dihydroxycampesterol (22,23-diOHCR). This Arabidopsis thaliana (Mouse-ear cress) protein is 3-epi-6-deoxocathasterone 23-monooxygenase CYP90D1.